The primary structure comprises 227 residues: Extracellular deoxyribonuclease (227 aa).

A signal peptide spans 1 to 20 (MFRPLLSFTLARLVSLPLHA).

It belongs to the EndA/NucM nuclease family.

The protein resides in the secreted. The sequence is that of Extracellular deoxyribonuclease from Aeromonas hydrophila.